Here is a 266-residue protein sequence, read N- to C-terminus: GRIP and coiled-coil domain-containing protein C365.11 (266 aa).

Polar residues predominate over residues 1 to 13; the sequence is METTVSAKNSLEN. The disordered stretch occupies residues 1–88; the sequence is METTVSAKNS…LDEKVKELEN (88 aa). A Phosphoserine modification is found at serine 10. Residues 36–49 are compositionally biased toward basic residues; the sequence is ASKKKRKNRKKKKN. The span at 63-88 shows a compositional bias: basic and acidic residues; the sequence is EEQRSGSIDSKDKEKPLDEKVKELEN. The stretch at 73–188 forms a coiled coil; the sequence is KDKEKPLDEK…ESVKSHESEL (116 aa). 2 positions are modified to phosphoserine: serine 202 and serine 204. Residues 216–264 enclose the GRIP domain; it reads ISKELINKEYARNVLLQFLENHEHRDKILPILSTALDLEEVHQHLILKN.

It is found in the cytoplasm. This Schizosaccharomyces pombe (strain 972 / ATCC 24843) (Fission yeast) protein is GRIP and coiled-coil domain-containing protein C365.11.